Here is a 770-residue protein sequence, read N- to C-terminus: Molybdenum cofactor sulfurase (770 aa).

The residue at position 243 (Lys243) is an N6-(pyridoxal phosphate)lysine. Cys405 is a catalytic residue. The MOSC domain maps to 611-769 (GDEVANWLCQ…LACGDPITVL (159 aa)). Position 726 is a phosphoserine (Ser726).

It belongs to the class-V pyridoxal-phosphate-dependent aminotransferase family. MOCOS subfamily. Pyridoxal 5'-phosphate is required as a cofactor.

The catalysed reaction is Mo-molybdopterin + L-cysteine + AH2 = thio-Mo-molybdopterin + L-alanine + A + H2O. Its pathway is cofactor biosynthesis; molybdopterin biosynthesis. Sulfurates the molybdenum cofactor. Sulfation of molybdenum is essential for xanthine dehydrogenase (XDH) and aldehyde oxidase (ADO) enzymes in which molybdenum cofactor is liganded by 1 oxygen and 1 sulfur atom in active form. The protein is Molybdenum cofactor sulfurase of Drosophila grimshawi (Hawaiian fruit fly).